Consider the following 52-residue polypeptide: Proteinase inhibitor (52 aa).

Pyrrolidone carboxylic acid is present on glutamine 1. 4 cysteine pairs are disulfide-bonded: cysteine 3-cysteine 40, cysteine 6-cysteine 24, cysteine 7-cysteine 36, and cysteine 13-cysteine 49.

It belongs to the protease inhibitor I20 (potato type II proteinase inhibitor) family.

It localises to the secreted. In Solanum melongena (Eggplant), this protein is Proteinase inhibitor.